Reading from the N-terminus, the 202-residue chain is Glycerol-3-phosphate acyltransferase (202 aa).

The next 6 membrane-spanning stretches (helical) occupy residues 2–22 (MIVV…GYVI), 54–74 (FIVT…PIWF), 85–105 (FFTH…YPIY), 120–140 (VVLG…FGVL), 141–161 (YIFK…VIGS), and 162–182 (LIIQ…ILIV).

It belongs to the PlsY family. In terms of assembly, probably interacts with PlsX.

The protein resides in the cell membrane. The catalysed reaction is an acyl phosphate + sn-glycerol 3-phosphate = a 1-acyl-sn-glycero-3-phosphate + phosphate. It participates in lipid metabolism; phospholipid metabolism. In terms of biological role, catalyzes the transfer of an acyl group from acyl-phosphate (acyl-PO(4)) to glycerol-3-phosphate (G3P) to form lysophosphatidic acid (LPA). This enzyme utilizes acyl-phosphate as fatty acyl donor, but not acyl-CoA or acyl-ACP. This is Glycerol-3-phosphate acyltransferase from Staphylococcus haemolyticus (strain JCSC1435).